The following is a 155-amino-acid chain: Ribonuclease 2B (155 aa).

The first 25 residues, 1–25 (MGLKLLESRLCLLLLLGLVLTLVSC), serve as a signal peptide directing secretion. His38 functions as the Proton acceptor in the catalytic mechanism. 4 disulfides stabilise this stretch: Cys47–Cys106, Cys61–Cys118, Cys79–Cys133, and Cys86–Cys94. Substrate is bound at residue 62 to 66 (KDLNT). N-linked (GlcNAc...) asparagine glycosylation is present at Asn114. Residue His150 is the Proton donor of the active site.

This sequence belongs to the pancreatic ribonuclease family.

It catalyses the reaction an [RNA] containing cytidine + H2O = an [RNA]-3'-cytidine-3'-phosphate + a 5'-hydroxy-ribonucleotide-3'-[RNA].. The catalysed reaction is an [RNA] containing uridine + H2O = an [RNA]-3'-uridine-3'-phosphate + a 5'-hydroxy-ribonucleotide-3'-[RNA].. In terms of biological role, this is a non-secretory ribonuclease. It is a pyrimidine specific nuclease with a slight preference for U. Cytotoxin and helminthotoxin. Possesses a wide variety of biological activities. In Mus musculus (Mouse), this protein is Ribonuclease 2B.